The primary structure comprises 199 residues: Glycerol-3-phosphate acyltransferase (199 aa).

A run of 5 helical transmembrane segments spans residues 4-24, 56-76, 80-100, 115-135, and 154-176; these read FALF…AILI, LAVL…GYYL, QFEL…PIFF, IAPI…FVFL, and YVWW…LIYR.

Belongs to the PlsY family. As to quaternary structure, probably interacts with PlsX.

Its subcellular location is the cell inner membrane. The catalysed reaction is an acyl phosphate + sn-glycerol 3-phosphate = a 1-acyl-sn-glycero-3-phosphate + phosphate. The protein operates within lipid metabolism; phospholipid metabolism. Functionally, catalyzes the transfer of an acyl group from acyl-phosphate (acyl-PO(4)) to glycerol-3-phosphate (G3P) to form lysophosphatidic acid (LPA). This enzyme utilizes acyl-phosphate as fatty acyl donor, but not acyl-CoA or acyl-ACP. The protein is Glycerol-3-phosphate acyltransferase of Haemophilus influenzae (strain PittEE).